Reading from the N-terminus, the 683-residue chain is Multidrug resistance protein MdtO (683 aa).

Transmembrane regions (helical) follow at residues 43 to 63 (VILISMTFEIPFVALSLAVLF), 75 to 95 (FVAILFVVATVLEIGSLFLIY), 100 to 120 (GEPLIRLIIAGPILMGCMFLM), 125 to 145 (LGLVFFAVAIVAIYGQTFPAM), 158 to 178 (WCIVVGLYPTLLMTLIGVLWF), 402 to 422 (FGGAFCGAILALLFTLLVMPW), 426 to 446 (IVELLFVLAPIFLLGAWIATS), 457 to 477 (MVVTFALATLENVFGPVYDLV), and 483 to 503 (ALGIIIGTVVSAVIYTFVWPE).

It belongs to the MdtO family. As to quaternary structure, could be part of a tripartite efflux system composed of MdtN, MdtO and MdtP.

It is found in the cell inner membrane. Could be involved in resistance to puromycin, acriflavine and tetraphenylarsonium chloride. The protein is Multidrug resistance protein MdtO (mdtO) of Escherichia coli (strain K12).